The primary structure comprises 171 residues: NADH-quinone oxidoreductase subunit I (171 aa).

4Fe-4S ferredoxin-type domains follow at residues 41–71 (LTRD…LQKT) and 81–110 (EFFR…LTPD). The [4Fe-4S] cluster site is built by C51, C54, C57, C61, C90, C93, C96, and C100.

It belongs to the complex I 23 kDa subunit family. NDH-1 is composed of 14 different subunits. Subunits NuoA, H, J, K, L, M, N constitute the membrane sector of the complex. [4Fe-4S] cluster serves as cofactor.

It is found in the cell inner membrane. The catalysed reaction is a quinone + NADH + 5 H(+)(in) = a quinol + NAD(+) + 4 H(+)(out). Functionally, NDH-1 shuttles electrons from NADH, via FMN and iron-sulfur (Fe-S) centers, to quinones in the respiratory chain. The immediate electron acceptor for the enzyme in this species is believed to be ubiquinone. Couples the redox reaction to proton translocation (for every two electrons transferred, four hydrogen ions are translocated across the cytoplasmic membrane), and thus conserves the redox energy in a proton gradient. This chain is NADH-quinone oxidoreductase subunit I, found in Methylococcus capsulatus (strain ATCC 33009 / NCIMB 11132 / Bath).